A 428-amino-acid polypeptide reads, in one-letter code: Trigger factor (428 aa).

Residues 163–248 (GDTAVIDFEG…INEVKAKELP (86 aa)) enclose the PPIase FKBP-type domain.

Belongs to the FKBP-type PPIase family. Tig subfamily.

The protein resides in the cytoplasm. It carries out the reaction [protein]-peptidylproline (omega=180) = [protein]-peptidylproline (omega=0). Its function is as follows. Involved in protein export. Acts as a chaperone by maintaining the newly synthesized protein in an open conformation. Functions as a peptidyl-prolyl cis-trans isomerase. The sequence is that of Trigger factor from Oceanobacillus iheyensis (strain DSM 14371 / CIP 107618 / JCM 11309 / KCTC 3954 / HTE831).